We begin with the raw amino-acid sequence, 246 residues long: 5-oxoprolinase subunit A (246 aa).

This sequence belongs to the LamB/PxpA family. In terms of assembly, forms a complex composed of PxpA, PxpB and PxpC.

The enzyme catalyses 5-oxo-L-proline + ATP + 2 H2O = L-glutamate + ADP + phosphate + H(+). In terms of biological role, catalyzes the cleavage of 5-oxoproline to form L-glutamate coupled to the hydrolysis of ATP to ADP and inorganic phosphate. The polypeptide is 5-oxoprolinase subunit A (Cupriavidus metallidurans (strain ATCC 43123 / DSM 2839 / NBRC 102507 / CH34) (Ralstonia metallidurans)).